The following is a 128-amino-acid chain: Large ribosomal subunit protein bL20 (128 aa).

The protein belongs to the bacterial ribosomal protein bL20 family.

Its function is as follows. Binds directly to 23S ribosomal RNA and is necessary for the in vitro assembly process of the 50S ribosomal subunit. It is not involved in the protein synthesizing functions of that subunit. This chain is Large ribosomal subunit protein bL20, found in Anaplasma phagocytophilum (strain HZ).